Here is a 663-residue protein sequence, read N- to C-terminus: MVSQSSGRQDSPVDPWEGVSDDPGNTDGLPSLLDTEHPFCPSDIRFTRHRAAWINPPCAQQQLQDASPQVLAVGNRESHTASNTKSPLGTSPLSLGDSVVETSLPKGTTDSLGSSSAWGTAGNGSDSSVTLKEERAGLPRRCPHTSLITSSKTVSGPPCPEDGRAFFKPSQLTASADADAVQVGGRTVSSNSFSPEAFVLPVDAEKENAHFYVADMIISVMEKMKCNILSQQHTETWSTEEAGRSLGNSRADLEGTFYTHVKQESGSSTSSDSGYEGCVLQVSPVVETPTFSEVTEEDCKCDFDDFVIVELGDFSNTTEPCGCSSDTSKSVIHEPNFNSAELIAKELYRVFRKCWMLAEVHYQLTGSLDAAGSIVINEERVQKDFESSTDVVQEIKLKSRIRGTGDWAPPRFQIIFDIHPPLKRDLVVIAQNFFCAGCGTPIEPKFVKRLRYCEYLGKYFCDCCHSYSESCIPARILRMWDFRKYYVSNFSKRLLDHIWHEPIFNLLHVSHGLYTKAKELDRVREIQEQLFHIKKLLKTCRFAESTLKEFEQLPGHLTEALHLFSLEDMVKVKKGLLAPLLKDILKASLEHVASCELCQGKGFICEFCRSTAVIFPFQTATCRRCSACRACFHKQCFQSSKCPRCARITARRRLLESLPSAAT.

Disordered regions lie at residues 1–36 and 65–136; these read MVSQ…LDTE and DASP…EERA. Polar residues-rich tracts occupy residues 80–93 and 105–130; these read TASN…TSPL and PKGT…SSVT. Positions 196 to 235 are interaction with UVRAG; it reads EAFVLPVDAEKENAHFYVADMIISVMEKMKCNILSQQHTE. Residues K484, K534, K574, and K634 each carry the N6-acetyllysine modification.

In terms of assembly, interacts with UVRAG; the interaction is direct and promotes association with the PI3K/PI3KC3 and HOPS complexes. Interacts with STX17. Post-translationally, acetylated by KAT5/TIP60 under autophagy induction, promoting autophagosome maturation and lipid metabolism. Lys-484 and Lys-574 constitute the key sites for tuning function in autophagy.

It is found in the cytoplasmic vesicle. It localises to the autophagosome membrane. Functionally, regulator of autophagy that promotes autophagosome maturation by facilitating the biogenesis of phosphatidylinositol 3-phosphate (PtdIns(3)P) in late steps of autophagy. Acts by antagonizing RUBCN, thereby stimulating phosphatidylinositol 3-kinase activity of the PI3K/PI3KC3 complex. Following anchorage to the autophagosomal SNARE STX17, promotes the recruitment of PI3K/PI3KC3 and HOPS complexes to the autophagosome to regulate the fusion specificity of autophagosomes with late endosomes/lysosomes. Binds phosphoinositides phosphatidylinositol 3-phosphate (PtdIns(3)P), 4-phosphate (PtdIns(4)P) and 5-phosphate (PtdIns(5)P). In addition to its role in autophagy, acts as a regulator of lipid and glycogen homeostasis. May act as a tumor suppressor. The protein is Protein associated with UVRAG as autophagy enhancer of Bos taurus (Bovine).